Here is a 142-residue protein sequence, read N- to C-terminus: MADNAKSLTVSIVTPDGQVYENKTPMLIVRTIDGELGILPNHIPVIASLAIDEVRIKQLESDQEDDEIAVNGGFVEFSNNTATIVADSAERQNDIDVARAENARKRAETRIQNAQQKHDDAELARAQVALRRAMNRLNVARH.

This sequence belongs to the ATPase epsilon chain family. As to quaternary structure, F-type ATPases have 2 components, CF(1) - the catalytic core - and CF(0) - the membrane proton channel. CF(1) has five subunits: alpha(3), beta(3), gamma(1), delta(1), epsilon(1). CF(0) has three main subunits: a, b and c.

It localises to the cell membrane. Functionally, produces ATP from ADP in the presence of a proton gradient across the membrane. This chain is ATP synthase epsilon chain, found in Lactiplantibacillus plantarum (strain ATCC BAA-793 / NCIMB 8826 / WCFS1) (Lactobacillus plantarum).